Reading from the N-terminus, the 339-residue chain is Deubiquitinase and deneddylase Dub2 (339 aa).

The chain crosses the membrane as a helical span at residues 36–56 (IIIALFLIVISCGLILCAYTF). Residues His-203, Asp-220, and Cys-282 contribute to the active site.

Belongs to the peptidase C48 family.

It localises to the secreted. Its subcellular location is the host cell. The protein localises to the membrane. Its function is as follows. Effector proteins function to alter host cell physiology and promote bacterial survival in host tissues. This protease possesses deubiquitinating and deneddylating activities. The sequence is that of Deubiquitinase and deneddylase Dub2 (cdu2) from Chlamydia trachomatis serovar D (strain ATCC VR-885 / DSM 19411 / UW-3/Cx).